Here is a 267-residue protein sequence, read N- to C-terminus: Small ribosomal subunit protein uS3 (267 aa).

A KH type-2 domain is found at 43–111 (IRKAMSKDLE…QVQLNIFEVK (69 aa)). The tract at residues 216-267 (FEEQQAQQSNNRQGRRGDRRPRRGQRNAAPQQNAAAEAPAAAEAPAATETKE) is disordered. Over residues 228 to 240 (QGRRGDRRPRRGQ) the composition is skewed to basic residues. Residues 241–267 (RNAAPQQNAAAEAPAAAEAPAATETKE) show a composition bias toward low complexity.

It belongs to the universal ribosomal protein uS3 family. In terms of assembly, part of the 30S ribosomal subunit. Forms a tight complex with proteins S10 and S14.

In terms of biological role, binds the lower part of the 30S subunit head. Binds mRNA in the 70S ribosome, positioning it for translation. The chain is Small ribosomal subunit protein uS3 from Bifidobacterium adolescentis (strain ATCC 15703 / DSM 20083 / NCTC 11814 / E194a).